A 305-amino-acid polypeptide reads, in one-letter code: Protoheme IX farnesyltransferase (305 aa).

Helical transmembrane passes span 31–51 (VMSL…YSVH), 52–72 (PFIA…AGAI), 96–118 (VIES…FFMA), 123–145 (LLAS…IWLK), 151–171 (NIVI…AAVS), 179–199 (IILF…LALF), 225–245 (ILIY…IGMN), 247–267 (FIYL…AGSL), and 281–301 (FAYS…TNTI).

Belongs to the UbiA prenyltransferase family. Protoheme IX farnesyltransferase subfamily.

The protein resides in the cell membrane. It catalyses the reaction heme b + (2E,6E)-farnesyl diphosphate + H2O = Fe(II)-heme o + diphosphate. Its pathway is porphyrin-containing compound metabolism; heme O biosynthesis; heme O from protoheme: step 1/1. In terms of biological role, converts heme B (protoheme IX) to heme O by substitution of the vinyl group on carbon 2 of heme B porphyrin ring with a hydroxyethyl farnesyl side group. This is Protoheme IX farnesyltransferase from Rickettsia africae (strain ESF-5).